The sequence spans 47 residues: Light-harvesting protein B800/850/890 alpha-2 chain (47 aa).

Residues 1 to 12 (MWRMWKILDYRR) are Cytoplasmic-facing. The chain crosses the membrane as a helical span at residues 13–33 (TVVLAHVGMAVLALLIHFILL). Residue His29 participates in a bacteriochlorophyll binding. Topologically, residues 34-47 (STESFNWLEGNPYG) are periplasmic.

It belongs to the antenna complex alpha subunit family. In terms of assembly, the core complex is formed by different alpha and beta chains, binding bacteriochlorophyll molecules, and arranged most probably in tetrameric structures disposed around the reaction center. The non-pigmented gamma chains may constitute additional components.

Its subcellular location is the cell inner membrane. In terms of biological role, antenna complexes are light-harvesting systems, which transfer the excitation energy to the reaction centers. This is Light-harvesting protein B800/850/890 alpha-2 chain from Halorhodospira halophila (strain DSM 244 / SL1) (Ectothiorhodospira halophila (strain DSM 244 / SL1)).